The primary structure comprises 85 residues: Large ribosomal subunit protein bL31B (85 aa).

Belongs to the bacterial ribosomal protein bL31 family. Type B subfamily. In terms of assembly, part of the 50S ribosomal subunit.

This is Large ribosomal subunit protein bL31B from Macrococcus caseolyticus (strain JCSC5402) (Macrococcoides caseolyticum).